We begin with the raw amino-acid sequence, 291 residues long: Porphobilinogen deaminase (291 aa).

At C237 the chain carries S-(dipyrrolylmethanemethyl)cysteine.

It belongs to the HMBS family. In terms of assembly, monomer. It depends on dipyrromethane as a cofactor.

It carries out the reaction 4 porphobilinogen + H2O = hydroxymethylbilane + 4 NH4(+). Its pathway is porphyrin-containing compound metabolism; protoporphyrin-IX biosynthesis; coproporphyrinogen-III from 5-aminolevulinate: step 2/4. Its function is as follows. Tetrapolymerization of the monopyrrole PBG into the hydroxymethylbilane pre-uroporphyrinogen in several discrete steps. The polypeptide is Porphobilinogen deaminase (Clostridium perfringens (strain 13 / Type A)).